The following is a 702-amino-acid chain: MGRRKIEIKAIKDDRNRSVTFLKRKGGLFKKAHELSVLCSVDVAVFIFGTNKKLYEYSSGDMRELITRYTYHGGATEHKGPSDFNGGDDDDEEEGDGTPPLDQPMDAHMMPPHFQGQGPFPPHVMRHYTPSASPPIPNGVPFPPHGHGVPRGHTPQPQMLSRPGSRNDARRMGQPMGPQGSPQVNGFGFGQQQSMYGPPNTTMPPHMPPQMAPGPPFPYPQHPQHPPHPPHPPHPPHPQQPHQPQMQQQFIEDGRRATMPANFAPHPPPPHGPMGMQRHSVSPPQQHPHHVPQLPPQQPQQHPHSSPPQPQHHQMQSPPQPMVKFESPQQIEPPQHQHQQQPEPQEPRPEQQQQQQQSQQSQQPQEPQSEPARSLPPPPPPLEVKTELAPPAQPGRIPQPSLLDTAVKKLPRQKQHSIFTPIDENRSILSQHLAAFHAEPSKNKSSPPAHHRSSSVDESTSNASEASRGKDKDIASSPPLLKRADPRASISSVSSAPESAPAPPSRSNSLRAGPPRPRLKVQIPDEQSEDGSGSATAESASSAQGGASTDATSQSTRQNDSHSSTNMVLPPPSPSASALLSAGATGPPNPFAPKRPPQHPAPGLNIDTPVSALPSRFLNNEFLPSPSSFYPDWNFRGGDNNTLPSPLNFATPVVGTGPSFLRDENPGASLKRKSPDNLSIHGPISDNPLEAGNEPKRVKVDS.

One can recognise an MADS-box domain in the interval 1-61 (MGRRKIEIKA…KKLYEYSSGD (61 aa)). 2 disordered regions span residues 73 to 608 (GGAT…NIDT) and 658 to 702 (PSFL…KVDS). Positions 86 to 96 (GGDDDDEEEGD) are enriched in acidic residues. Residues 132-144 (ASPPIPNGVPFPP) show a composition bias toward pro residues. The segment covering 145-155 (HGHGVPRGHTP) has biased composition (low complexity). A compositionally biased stretch (polar residues) spans 180 to 195 (GSPQVNGFGFGQQQSM). Residues 201 to 241 (TTMPPHMPPQMAPGPPFPYPQHPQHPPHPPHPPHPPHPQQP) are compositionally biased toward pro residues. Composition is skewed to low complexity over residues 273–284 (PMGMQRHSVSPP), 326–343 (ESPQQIEPPQHQHQQQPE), and 350–371 (EQQQQQQQSQQSQQPQEPQSEP). Positions 456–465 (VDESTSNASE) are enriched in polar residues. 2 stretches are compositionally biased toward low complexity: residues 487-512 (RASISSVSSAPESAPAPPSRSNSLRA) and 530-553 (DGSGSATAESASSAQGGASTDATS). Polar residues predominate over residues 554-567 (QSTRQNDSHSSTNM). The segment covering 587–600 (PPNPFAPKRPPQHP) has biased composition (pro residues). A compositionally biased stretch (basic and acidic residues) spans 693–702 (NEPKRVKVDS).

This sequence belongs to the MEF2 family. As to quaternary structure, interacts with MAPK MPS1.

The protein resides in the nucleus. Functionally, transcription factor acting downstream of the MPS1 MAP kinase (MAPK) cascade during conidiation and plant infection. Required for overcoming plant defense responses and the differentiation of secondary infectious hyphae in live plant cells. This is MADS-box MEF2 type transcription factor MIG1 from Pyricularia oryzae (Rice blast fungus).